The primary structure comprises 289 residues: MYG1 protein CT_386 (289 aa).

It belongs to the MYG1 family.

In Chlamydia trachomatis serovar D (strain ATCC VR-885 / DSM 19411 / UW-3/Cx), this protein is MYG1 protein CT_386.